We begin with the raw amino-acid sequence, 737 residues long: Serine/threonine-protein kinase dst1 (737 aa).

Positions 29 to 281 (YHIQERLGKG…AKELLNHEFI (253 aa)) constitute a Protein kinase domain. ATP is bound by residues 35–43 (LGKGSFGQV) and lysine 58. Residue aspartate 149 is the Proton acceptor of the active site. Disordered regions lie at residues 305–356 (SMFE…SNNY), 372–475 (KDDA…TTDQ), 491–559 (KPIT…ISNN), and 575–631 (NNNI…ESLS). 4 stretches are compositionally biased toward low complexity: residues 334–345 (NNNTVTNYSTVI), 401–410 (SSCSSSSSSS), 425–444 (PITNSPKISPISSNNINKIP), and 454–473 (ATTTTTTTTTTTTTAASTTT). The span at 491–503 (KPITSSNSTSVTP) shows a compositional bias: polar residues. Low complexity predominate over residues 510 to 525 (SNNTTTTSNINTPIKP). Composition is skewed to polar residues over residues 529–554 (LKKSNSNTPVQLKTSGDKTPTTTPLK) and 585–596 (SPTTGQKIIKTN). Residues 597 to 615 (SGGVLKSSGGLSSKRSPSS) are compositionally biased toward low complexity.

The protein belongs to the protein kinase superfamily. STE Ser/Thr protein kinase family. STE20 subfamily. It depends on Mg(2+) as a cofactor.

It carries out the reaction L-seryl-[protein] + ATP = O-phospho-L-seryl-[protein] + ADP + H(+). The enzyme catalyses L-threonyl-[protein] + ATP = O-phospho-L-threonyl-[protein] + ADP + H(+). The polypeptide is Serine/threonine-protein kinase dst1 (Dictyostelium discoideum (Social amoeba)).